Consider the following 489-residue polypeptide: Protein TOS4 (489 aa).

2 stretches are compositionally biased toward polar residues: residues 1 to 10 and 20 to 32; these read MSSQFPSSPY and NYKQQPNCPSSNY. Residues 1 to 101 form a disordered region; the sequence is MSSQFPSSPY…FSSKLSSPSR (101 aa). Ser-40 carries the phosphoserine modification. The span at 56-68 shows a compositional bias: polar residues; it reads PSSSIGRVSSPVR. Positions 89 to 100 are enriched in low complexity; sequence SPKFSSKLSSPS. Residue Ser-100 is modified to Phosphoserine. An FHA domain is found at 118–170; sequence ITVGRNSSQCDVALCKNKFISRVHASITYLPQTNEVKIHCFSMNGLIVTYRKQ. A disordered region spans residues 316-366; sequence SSPLSSVSSVDHEEQTLRQDSLSSDKNPMTMKKPKLNKRVLPSKPKKSVKE. Polar residues predominate over residues 333-342; it reads RQDSLSSDKN.

Belongs to the PLM2/TOS4 family. In terms of processing, phosphorylated by CDC28.

It localises to the nucleus. Binds to the promoters of genes with functions important for the G1/S (start) transition; primarily genes involved in pheromone response, polarized growth and transcription. The polypeptide is Protein TOS4 (TOS4) (Saccharomyces cerevisiae (strain ATCC 204508 / S288c) (Baker's yeast)).